The primary structure comprises 176 residues: Phosphopantetheine adenylyltransferase (176 aa).

Substrate is bound at residue Ser8. ATP contacts are provided by residues 8-9 (SF) and His16. Residues Lys40, Thr72, and Arg86 each coordinate substrate. ATP contacts are provided by residues 87-89 (GLR), Glu97, and 122-128 (YSFLSSS).

It belongs to the bacterial CoaD family. Homohexamer. It depends on Mg(2+) as a cofactor.

The protein resides in the cytoplasm. The catalysed reaction is (R)-4'-phosphopantetheine + ATP + H(+) = 3'-dephospho-CoA + diphosphate. It functions in the pathway cofactor biosynthesis; coenzyme A biosynthesis; CoA from (R)-pantothenate: step 4/5. Reversibly transfers an adenylyl group from ATP to 4'-phosphopantetheine, yielding dephospho-CoA (dPCoA) and pyrophosphate. The polypeptide is Phosphopantetheine adenylyltransferase (Acaryochloris marina (strain MBIC 11017)).